The chain runs to 201 residues: Syndecan-2 (201 aa).

A signal peptide spans 1-18 (MRRAWILLTLGLVACVSA). Residues 19–144 (ESRAELTSDK…HSDSLFKRTE (126 aa)) lie on the Extracellular side of the membrane. Ser-41, Ser-55, and Ser-57 each carry an O-linked (Xyl...) (glycosaminoglycan) serine glycan. Disordered stretches follow at residues 42-70 (GVYPIDDDDYASASGSGADEDVESPELTT) and 90-130 (TLNI…DTNV). Residues 90-102 (TLNIQNKIPAQTK) are compositionally biased toward polar residues. O-linked (GalNAc...) threonine glycosylation occurs at Thr-101. The span at 103–123 (SPEETDKEKVHLSDSERKMDP) shows a compositional bias: basic and acidic residues. A Phosphoserine; by FAM20C modification is found at Ser-115. A helical membrane pass occupies residues 145–169 (VLAAVIAGGVIGFLFAIFLILLLVY). Residues 170 to 201 (RMRKKDEGSYDLGERKPSSAAYQKAPTKEFYA) lie on the Cytoplasmic side of the membrane. Residues 178–201 (SYDLGERKPSSAAYQKAPTKEFYA) form a disordered region. Ser-187 carries the post-translational modification Phosphoserine.

It belongs to the syndecan proteoglycan family. Interacts (via cytoplasmic domain) with SARM1. Forms a complex with SDCBP and PDCD6IP. In terms of processing, O-glycosylated with core 1 or possibly core 8 glycans. Contains heparan sulfate. Also contains chondroitin sulfate.

The protein localises to the membrane. In terms of biological role, cell surface proteoglycan which regulates dendritic arbor morphogenesis. The sequence is that of Syndecan-2 (SDC2) from Homo sapiens (Human).